Consider the following 564-residue polypeptide: 2-succinyl-5-enolpyruvyl-6-hydroxy-3-cyclohexene-1-carboxylate synthase (564 aa).

This sequence belongs to the TPP enzyme family. MenD subfamily. In terms of assembly, homodimer. Mg(2+) serves as cofactor. Mn(2+) is required as a cofactor. Requires thiamine diphosphate as cofactor.

The enzyme catalyses isochorismate + 2-oxoglutarate + H(+) = 5-enolpyruvoyl-6-hydroxy-2-succinyl-cyclohex-3-ene-1-carboxylate + CO2. It functions in the pathway quinol/quinone metabolism; 1,4-dihydroxy-2-naphthoate biosynthesis; 1,4-dihydroxy-2-naphthoate from chorismate: step 2/7. The protein operates within quinol/quinone metabolism; menaquinone biosynthesis. Functionally, catalyzes the thiamine diphosphate-dependent decarboxylation of 2-oxoglutarate and the subsequent addition of the resulting succinic semialdehyde-thiamine pyrophosphate anion to isochorismate to yield 2-succinyl-5-enolpyruvyl-6-hydroxy-3-cyclohexene-1-carboxylate (SEPHCHC). The sequence is that of 2-succinyl-5-enolpyruvyl-6-hydroxy-3-cyclohexene-1-carboxylate synthase from Vibrio vulnificus (strain YJ016).